A 167-amino-acid polypeptide reads, in one-letter code: Ammonium/H(+) antiporter subunit AmhM (167 aa).

In terms of domain architecture, RCK C-terminal spans 79–163 (IDRIKLIRKQ…IQKFEELCAC (85 aa)).

As to quaternary structure, interacts with AmhT.

It localises to the cell membrane. Its function is as follows. Modulates the activity of the ammonium/proton antiporter AmhT. The polypeptide is Ammonium/H(+) antiporter subunit AmhM (amhM) (Alkalihalophilus pseudofirmus (strain ATCC BAA-2126 / JCM 17055 / OF4) (Bacillus pseudofirmus)).